A 550-amino-acid polypeptide reads, in one-letter code: CTP synthase (550 aa).

The tract at residues 1–271 (MTRYIFITGG…DAEVLDVFGM (271 aa)) is amidoligase domain. Ser-13 is a binding site for CTP. Residue Ser-13 participates in UTP binding. 14 to 19 (SLGKGL) serves as a coordination point for ATP. Tyr-54 is a binding site for L-glutamine. Asp-71 contributes to the ATP binding site. Mg(2+)-binding residues include Asp-71 and Glu-145. CTP contacts are provided by residues 152-154 (DIE), 192-197 (KTKPTQ), and Lys-228. Residues 192 to 197 (KTKPTQ) and Lys-228 each bind UTP. One can recognise a Glutamine amidotransferase type-1 domain in the interval 297–549 (TIAVVGKYTV…IAAAKEHGRL (253 aa)). Gly-361 provides a ligand contact to L-glutamine. Residue Cys-388 is the Nucleophile; for glutamine hydrolysis of the active site. L-glutamine is bound by residues 389–392 (FGMQ), Glu-412, and Arg-477. Residues His-522 and Glu-524 contribute to the active site.

It belongs to the CTP synthase family. Homotetramer.

It carries out the reaction UTP + L-glutamine + ATP + H2O = CTP + L-glutamate + ADP + phosphate + 2 H(+). It catalyses the reaction L-glutamine + H2O = L-glutamate + NH4(+). The enzyme catalyses UTP + NH4(+) + ATP = CTP + ADP + phosphate + 2 H(+). It functions in the pathway pyrimidine metabolism; CTP biosynthesis via de novo pathway; CTP from UDP: step 2/2. Its activity is regulated as follows. Allosterically activated by GTP, when glutamine is the substrate; GTP has no effect on the reaction when ammonia is the substrate. The allosteric effector GTP functions by stabilizing the protein conformation that binds the tetrahedral intermediate(s) formed during glutamine hydrolysis. Inhibited by the product CTP, via allosteric rather than competitive inhibition. Functionally, catalyzes the ATP-dependent amination of UTP to CTP with either L-glutamine or ammonia as the source of nitrogen. Regulates intracellular CTP levels through interactions with the four ribonucleotide triphosphates. This is CTP synthase from Caulobacter vibrioides (strain ATCC 19089 / CIP 103742 / CB 15) (Caulobacter crescentus).